A 487-amino-acid chain; its full sequence is F-box/LRR-repeat protein At1g48400 (487 aa).

In terms of domain architecture, F-box spans 9–57 (RDSISNLPDEILGKILSLLPTKVAASTSVLSKRWRNLLGLVDNLCFDES). 6 LRR repeats span residues 71–97 (SLRFCDFVDKTFALLSNSHIKKFSLSR), 125–153 (HLHATPMSFVAIETKLLTSNTLVKLTLSA), 174–199 (SILGDYTNYIRLIDGCPVLEELYMRD), 225–251 (THNPNEMIWHELIYFEAPSLVYLDYSS), 327–358 (TLHLSPDSLEVFHFCCKSMPVFNNLLNLSIES), and 359–384 (NKDKGWQVMPLLLKSCPNLHTLVIKG).

The chain is F-box/LRR-repeat protein At1g48400 from Arabidopsis thaliana (Mouse-ear cress).